A 307-amino-acid chain; its full sequence is Thymidylate synthase (307 aa).

Position 44 (Arg-44) interacts with dUMP. Ser-108 is subject to Phosphoserine. DUMP is bound by residues 169–170 (RR), 189–190 (CH), 209–212 (RSGD), Asn-220, and 250–252 (HIY). Cys-189 functions as the Nucleophile in the catalytic mechanism. Asp-212 serves as a coordination point for (6R)-5,10-methylene-5,6,7,8-tetrahydrofolate. Glycyl lysine isopeptide (Lys-Gly) (interchain with G-Cter in SUMO2) cross-links involve residues Lys-286 and Lys-302. Ala-306 serves as a coordination point for (6R)-5,10-methylene-5,6,7,8-tetrahydrofolate.

The protein belongs to the thymidylate synthase family. As to quaternary structure, homodimer.

The protein resides in the nucleus. Its subcellular location is the cytoplasm. It localises to the mitochondrion. It is found in the mitochondrion matrix. The protein localises to the mitochondrion inner membrane. It catalyses the reaction dUMP + (6R)-5,10-methylene-5,6,7,8-tetrahydrofolate = 7,8-dihydrofolate + dTMP. It functions in the pathway pyrimidine metabolism; dTTP biosynthesis. Its function is as follows. Catalyzes the reductive methylation of 2'-deoxyuridine 5'-monophosphate (dUMP) to thymidine 5'-monophosphate (dTMP), using the cosubstrate, 5,10- methylenetetrahydrofolate (CH2H4folate) as a 1-carbon donor and reductant and contributes to the de novo mitochondrial thymidylate biosynthesis pathway. This Mus musculus (Mouse) protein is Thymidylate synthase (Tyms).